The sequence spans 302 residues: UDP-N-acetylenolpyruvoylglucosamine reductase (302 aa).

Positions 30-196 constitute an FAD-binding PCMH-type domain; sequence IGGPADLFVE…IAATLEMKKG (167 aa). Residue arginine 174 is part of the active site. The active-site Proton donor is the serine 225. Glutamate 295 is a catalytic residue.

Belongs to the MurB family. Requires FAD as cofactor.

Its subcellular location is the cytoplasm. The enzyme catalyses UDP-N-acetyl-alpha-D-muramate + NADP(+) = UDP-N-acetyl-3-O-(1-carboxyvinyl)-alpha-D-glucosamine + NADPH + H(+). The protein operates within cell wall biogenesis; peptidoglycan biosynthesis. Its function is as follows. Cell wall formation. This Anoxybacillus flavithermus (strain DSM 21510 / WK1) protein is UDP-N-acetylenolpyruvoylglucosamine reductase.